The primary structure comprises 66 residues: Photosystem II reaction center protein H (66 aa).

The chain crosses the membrane as a helical span at residues 27 to 47 (GAVPIMTVIGLLLLVFLVILL).

This sequence belongs to the PsbH family. As to quaternary structure, PSII is composed of 1 copy each of membrane proteins PsbA, PsbB, PsbC, PsbD, PsbE, PsbF, PsbH, PsbI, PsbJ, PsbK, PsbL, PsbM, PsbT, PsbX, PsbY, Psb30/Ycf12, peripheral proteins PsbO, CyanoQ (PsbQ), PsbU, PsbV and a large number of cofactors. It forms dimeric complexes.

Its subcellular location is the cellular thylakoid membrane. Its function is as follows. One of the components of the core complex of photosystem II (PSII), required for its stability and/or assembly. PSII is a light-driven water:plastoquinone oxidoreductase that uses light energy to abstract electrons from H(2)O, generating O(2) and a proton gradient subsequently used for ATP formation. It consists of a core antenna complex that captures photons, and an electron transfer chain that converts photonic excitation into a charge separation. This Prochlorococcus marinus (strain MIT 9515) protein is Photosystem II reaction center protein H.